The primary structure comprises 526 residues: DDB1- and CUL4-associated factor 17 (526 aa).

The next 2 helical transmembrane spans lie at 200–220 (ILMR…MLEI) and 237–257 (GVLA…EYIV).

The protein resides in the membrane. It localises to the nucleus. Its subcellular location is the nucleolus. Its pathway is protein modification; protein ubiquitination. In terms of biological role, may function as a substrate receptor for CUL4-DDB1 E3 ubiquitin-protein ligase complex. The sequence is that of DDB1- and CUL4-associated factor 17 (dcaf17) from Danio rerio (Zebrafish).